Here is a 504-residue protein sequence, read N- to C-terminus: Glycine--tRNA ligase (504 aa).

Arginine 99 and glutamate 189 together coordinate substrate. ATP-binding positions include 221–223 (RNE), 231–236 (FRVREL), 306–307 (EI), and 365–368 (GVDR). 236–240 (LEQME) is a binding site for substrate. 361–365 (EPSAG) contributes to the substrate binding site.

It belongs to the class-II aminoacyl-tRNA synthetase family. In terms of assembly, homodimer.

Its subcellular location is the cytoplasm. The enzyme catalyses tRNA(Gly) + glycine + ATP = glycyl-tRNA(Gly) + AMP + diphosphate. Its function is as follows. Catalyzes the attachment of glycine to tRNA(Gly). This is Glycine--tRNA ligase from Deinococcus geothermalis (strain DSM 11300 / CIP 105573 / AG-3a).